A 517-amino-acid polypeptide reads, in one-letter code: Perilipin-1 (517 aa).

Ser-81 carries the phosphoserine modification. Thr-85 carries the post-translational modification Phosphothreonine. 5 positions are modified to phosphoserine: Ser-126, Ser-130, Ser-132, Ser-137, and Ser-174. The segment at 195-216 (DKESAPSSGRQRTQKAPKAKPS) is disordered. Residues Thr-223, Thr-298, and Thr-300 each carry the phosphothreonine modification. Positions 286-320 (LAASQDESHDDQTDTEGEETDDEEEEEESEAEENV) are disordered. The interval 290 to 321 (QDESHDDQTDTEGEETDDEEEEEESEAEENVL) is required for interaction with CIDEC. Positions 298–318 (TDTEGEETDDEEEEEESEAEE) are enriched in acidic residues. Residues Ser-314, Ser-384, Ser-386, Ser-410, Ser-433, Ser-439, Ser-460, Ser-492, and Ser-494 each carry the phosphoserine modification. The disordered stretch occupies residues 425–490 (SAEAERKGSG…AMPREKPARR (66 aa)).

It belongs to the perilipin family. In terms of assembly, interacts with ABHD5. Interacts with CIDEC. Interacts with AQP7. Major cAMP-dependent protein kinase-substrate in adipocytes, also dephosphorylated by PP1. When phosphorylated, may be maximally sensitive to HSL and when unphosphorylated, may play a role in the inhibition of lipolysis, by acting as a barrier in lipid droplet.

The protein localises to the endoplasmic reticulum. It is found in the lipid droplet. Its function is as follows. Modulator of adipocyte lipid metabolism. Coats lipid storage droplets to protect them from breakdown by hormone-sensitive lipase (HSL). Its absence may result in leanness. Plays a role in unilocular lipid droplet formation by activating CIDEC. Their interaction promotes lipid droplet enlargement and directional net neutral lipid transfer. May modulate lipolysis and triglyceride levels. The sequence is that of Perilipin-1 (Plin1) from Mus musculus (Mouse).